Here is a 143-residue protein sequence, read N- to C-terminus: Large ribosomal subunit protein uL11 (143 aa).

It belongs to the universal ribosomal protein uL11 family. Part of the ribosomal stalk of the 50S ribosomal subunit. Interacts with L10 and the large rRNA to form the base of the stalk. L10 forms an elongated spine to which L12 dimers bind in a sequential fashion forming a multimeric L10(L12)X complex. One or more lysine residues are methylated.

Forms part of the ribosomal stalk which helps the ribosome interact with GTP-bound translation factors. The chain is Large ribosomal subunit protein uL11 from Methylococcus capsulatus (strain ATCC 33009 / NCIMB 11132 / Bath).